The following is a 124-amino-acid chain: Colorectal cancer-associated protein 1 (124 aa).

The chain crosses the membrane as a helical span at residues Leu77–Ala97.

As to expression, expressed in gastrointestinal and immune tissue, as well as prostate, testis and ovary. Expressed in lamina propria and eosinophils but not in epithelial cells. Expression is greater in benign adjacent tissues than in colon tumors.

The protein resides in the membrane. The protein is Colorectal cancer-associated protein 1 (COLCA1) of Homo sapiens (Human).